Here is a 263-residue protein sequence, read N- to C-terminus: 2-dehydro-3-deoxyphosphooctonate aldolase (263 aa).

This sequence belongs to the KdsA family.

It is found in the cytoplasm. The enzyme catalyses D-arabinose 5-phosphate + phosphoenolpyruvate + H2O = 3-deoxy-alpha-D-manno-2-octulosonate-8-phosphate + phosphate. Its pathway is carbohydrate biosynthesis; 3-deoxy-D-manno-octulosonate biosynthesis; 3-deoxy-D-manno-octulosonate from D-ribulose 5-phosphate: step 2/3. It functions in the pathway bacterial outer membrane biogenesis; lipopolysaccharide biosynthesis. In Wolinella succinogenes (strain ATCC 29543 / DSM 1740 / CCUG 13145 / JCM 31913 / LMG 7466 / NCTC 11488 / FDC 602W) (Vibrio succinogenes), this protein is 2-dehydro-3-deoxyphosphooctonate aldolase.